The following is a 162-amino-acid chain: Endoribonuclease YbeY (162 aa).

Residues His-118, His-122, and His-128 each contribute to the Zn(2+) site.

It belongs to the endoribonuclease YbeY family. The cofactor is Zn(2+).

Its subcellular location is the cytoplasm. Single strand-specific metallo-endoribonuclease involved in late-stage 70S ribosome quality control and in maturation of the 3' terminus of the 16S rRNA. The protein is Endoribonuclease YbeY of Caulobacter sp. (strain K31).